We begin with the raw amino-acid sequence, 103 residues long: Large ribosomal subunit protein bL21 (103 aa).

It belongs to the bacterial ribosomal protein bL21 family. In terms of assembly, part of the 50S ribosomal subunit. Contacts protein L20.

Its function is as follows. This protein binds to 23S rRNA in the presence of protein L20. The polypeptide is Large ribosomal subunit protein bL21 (Ralstonia nicotianae (strain ATCC BAA-1114 / GMI1000) (Ralstonia solanacearum)).